The chain runs to 207 residues: Large ribosomal subunit protein uL4 (207 aa).

Positions 48-70 (KAQKTRSEVSGGGAKPWRQKGTG) are disordered.

This sequence belongs to the universal ribosomal protein uL4 family. As to quaternary structure, part of the 50S ribosomal subunit.

In terms of biological role, one of the primary rRNA binding proteins, this protein initially binds near the 5'-end of the 23S rRNA. It is important during the early stages of 50S assembly. It makes multiple contacts with different domains of the 23S rRNA in the assembled 50S subunit and ribosome. Forms part of the polypeptide exit tunnel. This is Large ribosomal subunit protein uL4 from Francisella philomiragia subsp. philomiragia (strain ATCC 25017 / CCUG 19701 / FSC 153 / O#319-036).